The following is a 274-amino-acid chain: Acyl-coenzyme A diphosphatase YFT2 (274 aa).

Topologically, residues 1–11 (MIRQLNYWSRK) are cytoplasmic. The chain crosses the membrane as a helical span at residues 12-32 (AYLIYPFQVFVGALLSIVVSS). The Lumenal segment spans residues 33-60 (ETLNHQKETCALLKSSNIFNVIFAYKAN). The helical transmembrane segment at 61 to 81 (QLWPFLFFSLAFLQIYFHYLA) threads the bilayer. The Cytoplasmic segment spans residues 82–124 (RMDILPLPISSTETSSSYLTYTNHWPLLKNRIISIMITQYACK). The helical transmembrane segment at 125-145 (FVLKYLLLFLNFQFIDHVFIW) threads the bilayer. Residues 146–170 (TGGECSSGSKTTSAEKCRLENGKWD) are Lumenal-facing. A helical membrane pass occupies residues 171-191 (GGFDISGHFCFLVSISMILWM). Residue H178 is part of the active site. At 192–215 (ELHLFSRFVQAEDMFWVVNKWVRA) the chain is on the cytoplasmic side. A helical transmembrane segment spans residues 216–236 (CLAIVCAVLVIWICILWVTAI). Residues 237 to 247 (YYHTILEKVLG) lie on the Lumenal side of the membrane. H239 is an active-site residue. A helical membrane pass occupies residues 248 to 268 (CLMGFICPVFIYHILPKIGIL). The Cytoplasmic segment spans residues 269 to 274 (HNYLYL).

This sequence belongs to the FIT family. Yeast FIT2A/YFT2 subfamily.

It localises to the endoplasmic reticulum membrane. Its subcellular location is the vacuole. The catalysed reaction is an acyl-CoA + H2O = an acyl-4'-phosphopantetheine + adenosine 3',5'-bisphosphate + 2 H(+). It catalyses the reaction (9Z)-octadecenoyl-CoA + H2O = S-(9Z-octadecenoyl)-4'-phosphopantetheine + adenosine 3',5'-bisphosphate + 2 H(+). The enzyme catalyses (5Z,8Z,11Z,14Z)-eicosatetraenoyl-CoA + H2O = S-(5Z,8Z,11Z,14Z-eicosatetraenoyl)-4'-phosphopantetheine + adenosine 3',5'-bisphosphate + 2 H(+). It carries out the reaction hexadecanoyl-CoA + H2O = S-hexadecanoyl-4'-phosphopantetheine + adenosine 3',5'-bisphosphate + 2 H(+). In terms of biological role, fatty acyl-coenzyme A (CoA) diphosphatase that hydrolyzes fatty acyl-CoA to yield acyl-4'-phosphopantetheine and adenosine 3',5'-bisphosphate. Preferentially hydrolyzes unsaturated long-chain acyl-CoA substrates in the endoplasmic reticulum (ER) lumen. This catalytic activity is required for maintaining ER structure and for lipid droplets (LDs) biogenesis, which are lipid storage organelles involved in maintaining lipid and energy homeostasis. May directly bind to diacylglycerol (DAGs) and triacylglycerol, which is also important for LD biogenesis. May support directional budding of nacent LDs from the ER into the cytosol by reducing DAG levels at sites of LD formation. May play a role in the regulation of cell morphology and cytoskeletal organization. Involved in phospholipid biosynthesis. The chain is Acyl-coenzyme A diphosphatase YFT2 from Saccharomyces cerevisiae (strain ATCC 204508 / S288c) (Baker's yeast).